Here is a 1062-residue protein sequence, read N- to C-terminus: MNRFTAYAALFFIFSLCSTAKEAGFQHPAFNFRGTSTMSALSGDYSAAPTPLYKSWALPSSLNLTTQPPPLLTDRSYYELVQALISKMRLDCQTVGDMTWRHLSEMLFASWNSVKEVSLKAASVTLWAIISIWFGLYWTLARLITLFLWTFSIEALCLILLGCITSLIYKGALSLSEHLPVFLFMSPLKIIWRAAFSKRNYKNEKAVEGYKGFSVPQKPPKSAVIELQHENGSHLGYANCIRLYSGENALVTAEHCLEGAFATSLKTGNRIPMSTFFPIFKSARNDISILVGPPNWEGLLSVKGAHFITADKIGKGPASFYTLEKGEWMCHSATIDGAHHQFVSVLCNTGPGYSGTGFWSSKNLLGVLKGFPLEEECNYNVMSVIPSIPGITSPNYVFESTAVKGRVFSDETVKELEREASEAVKKLARFKSLTGKNWANDYDSDEDYGLEKEAATNAPAEKTAQTNSAEKTAPSTSAEKTAPTNKPFKWASGTARQNKRQLRHPRRRYKRTTNGQNGRTDHHSYGGENQSLGDRGEDSEQGVSESPAEAQTKQTRKTWREEQAKQFTSYFDAIYKWGAQEEGCPPGFRKCGNIPGYYHPRTKGETKWGQKLCQVHPELADKTAGFGWPKAGFEAELQSLNLQAARWLQRAESATIPGAEARKRVIEKTVEAYRNCITNAPLCSLKSKLDWAGFQQDIREAVQSLELDAGVGIPYIAYGLPTHRGWVEDHKLLPVLTQLTFDRLQKMSEASFEDMSAEELVQEGLCDPIRLFVKGEPHKQSKLDEGRYRLIMSVSLVDQLVARVLFQNQNKREISLWRSVPSKPGFGLSTDTQTAEFLECLQKVSGAPSVEELCANHKEHTRPTDCSGFDWSVAYWMLEDDMEVRNRLTFNNTQLTERLRAAWLKCIGNSVLCLSDGTLLAQTVPGVQKSGSYNTSSSNSRIRVMAAYHCGADWAMAMGDDALEAPNSDLEEYKTLGFKVEVGRELEFCSHIFRNPTLAVPVNTNKMLYKLIHGYNPECGNPEVIQNYLAAVFSVLQELRHDRELVAKLHQWLVPSATTKEH.

The signal sequence occupies residues 1–20 (MNRFTAYAALFFIFSLCSTA). The next 3 membrane-spanning stretches (helical) occupy residues 121–141 (AASVTLWAIISIWFGLYWTLA), 144–164 (ITLFLWTFSIEALCLILLGCI), and 172–192 (ALSLSEHLPVFLFMSPLKIIW). The 193-residue stretch at 207–399 (VEGYKGFSVP…GITSPNYVFE (193 aa)) folds into the Peptidase S39 domain. Residues His255, Asp286, and Ser354 each act as for protease activity in the active site. Residues 456–557 (TNAPAEKTAQ…AEAQTKQTRK (102 aa)) are disordered. A compositionally biased stretch (polar residues) spans 463-484 (TAQTNSAEKTAPSTSAEKTAPT). The span at 497 to 511 (QNKRQLRHPRRRYKR) shows a compositional bias: basic residues. The segment covering 541–553 (QGVSESPAEAQTK) has biased composition (polar residues). Positions 859 to 974 (EHTRPTDCSG…APNSDLEEYK (116 aa)) constitute a RdRp catalytic domain.

Specific enzymatic cleavages in vivo yield mature proteins. The protease probably cleaves itself and releases the RdRp (Potential). Cleavages have been shown in the P1 protein, but since the N-terminus containing the serine protease is shared between P1 and P1-P2, cleavages should also occur within the P1-P2 protein.

The protein localises to the membrane. The enzyme catalyses RNA(n) + a ribonucleoside 5'-triphosphate = RNA(n+1) + diphosphate. Its function is as follows. Precursor from which the RNA-dependent RNA polymerase (RdRp) is probably released. RNA-dependent RNA polymerase plays an essential role in virus replication (Potential). The sequence is that of Protein P1-P2 from Solanum tuberosum (Potato).